Consider the following 491-residue polypeptide: Transmembrane protein 200A (491 aa).

Topologically, residues 1 to 61 are cytoplasmic; that stretch reads MIATGGVITG…RGKIRLYSPS (61 aa). Residues 16-41 are disordered; that stretch reads RQDSARSQQHVNLSPSPATQEKKPIR. The segment covering 20-34 has biased composition (polar residues); that stretch reads ARSQQHVNLSPSPAT. Residues 62-82 form a helical membrane-spanning segment; that stretch reads GFFLILGVLISIIGIAMAVLG. The Extracellular portion of the chain corresponds to 83 to 126; sequence YWPQKEHFIDAETTLSTNETQVIRNEGGVVVRFFEQHLHSDKMK. The N-linked (GlcNAc...) asparagine glycan is linked to N100. The helical transmembrane segment at 127–147 threads the bilayer; sequence MLGPFTMGIGIFIFICANAIL. The Cytoplasmic segment spans residues 148–491; the sequence is HENRDKETKI…LKRGTSETRF (344 aa). Phosphoserine is present on S350.

Belongs to the TMEM200 family. In terms of tissue distribution, expressed in cerebellum.

The protein resides in the membrane. The chain is Transmembrane protein 200A (TMEM200A) from Homo sapiens (Human).